Here is an 880-residue protein sequence, read N- to C-terminus: MWSSAEIRKTFLEYFEERGHSVVESSSLVPVNDPTLLFTNAGMNQFKDVFLGLDKRKYVRATSSQKCVRAGGKHNDLDTVGRTPRHHTFFEMLGNFSFGDYFKREAIGYAWEFLTEVVGLPEEKLWVTIYQDDDEAADLWPEISGIDPGRIVRLGEKDNFWSMGDTGPCGPCSEILYDRGIEYSCGAPDCGIGVCDCDRWLEIWNLVFMQFNRDESGEMTPLPRPSIDTGMGLERLSSILQGVDSNFDTDLFIPIIKRIEELTGKAYEQGERGFPFRVIADHSRACSFLIADGVLPSNDGRGYVLRRILRRALRFGRFLGIEGSFLYKNVDVVCDIMQEAYPELLEKQDFIKEVIRLEEERFLLTLNDGLKKAEEIMERARQRGDNVIPGEEAFMLYDTYGFPLDLTEDMAEENQFTLDKAGFDRSMEEQRQRARQANKGEDLLGQERLLSEKLAGIAPSSFTGYENSRDESVLLAIIKGSELMDKALNGEEVILITARTPFYAESGGQVADCGIIKGQEGLLRVQDVKKLSAWILHYGIVEGVLTTGEGVSLQLDDPARMDTARNHTATHLLHRALREVLGEHAQQKGSLVEPARLRFDFSHLKALSSEELSRIEQMVNEAIWKLYPVTTTVTALGQAREMGAMALFGEKYGEEVRVVQVDTYSSELCGGTHVQNTGQIGLFKITGEGSIGSGLRRIEAITGSYALEYIKQLEDELKKAASALRSSPLELAKRIENLNNSLKEKDKEIENLLQRLSRSSSDELVNKAFQLNDAWILIEEVDIEDPGSLRQNAEMLKDKLGRAIVMLASIKGEKVSFVCFVSKDLLEQGLHAGKIVAAAAQVAGGGGGGRPDMAQAGGRDKSKISEALAEARKMVKKTLS.

Zn(2+) is bound by residues H567, H571, C669, and H673.

It belongs to the class-II aminoacyl-tRNA synthetase family. Zn(2+) is required as a cofactor.

It is found in the cytoplasm. It catalyses the reaction tRNA(Ala) + L-alanine + ATP = L-alanyl-tRNA(Ala) + AMP + diphosphate. Its function is as follows. Catalyzes the attachment of alanine to tRNA(Ala) in a two-step reaction: alanine is first activated by ATP to form Ala-AMP and then transferred to the acceptor end of tRNA(Ala). Also edits incorrectly charged Ser-tRNA(Ala) and Gly-tRNA(Ala) via its editing domain. This Syntrophomonas wolfei subsp. wolfei (strain DSM 2245B / Goettingen) protein is Alanine--tRNA ligase.